Here is a 156-residue protein sequence, read N- to C-terminus: Ribosomal RNA large subunit methyltransferase H (156 aa).

S-adenosyl-L-methionine-binding positions include leucine 73, glycine 104, and 123–128; that span reads ISSMTL.

Belongs to the RNA methyltransferase RlmH family. As to quaternary structure, homodimer.

Its subcellular location is the cytoplasm. It carries out the reaction pseudouridine(1915) in 23S rRNA + S-adenosyl-L-methionine = N(3)-methylpseudouridine(1915) in 23S rRNA + S-adenosyl-L-homocysteine + H(+). In terms of biological role, specifically methylates the pseudouridine at position 1915 (m3Psi1915) in 23S rRNA. The chain is Ribosomal RNA large subunit methyltransferase H from Burkholderia multivorans (strain ATCC 17616 / 249).